A 555-amino-acid polypeptide reads, in one-letter code: Urocanate hydratase (555 aa).

Residues 51–52 (GG), glutamine 129, 175–177 (GMG), glutamate 195, 262–266 (QTSAH), 272–273 (YL), and tyrosine 321 contribute to the NAD(+) site. Residue cysteine 409 is part of the active site. An NAD(+)-binding site is contributed by glycine 491.

Belongs to the urocanase family. The cofactor is NAD(+).

Its subcellular location is the cytoplasm. The catalysed reaction is 4-imidazolone-5-propanoate = trans-urocanate + H2O. It functions in the pathway amino-acid degradation; L-histidine degradation into L-glutamate; N-formimidoyl-L-glutamate from L-histidine: step 2/3. Its function is as follows. Catalyzes the conversion of urocanate to 4-imidazolone-5-propionate. The protein is Urocanate hydratase of Xanthomonas campestris pv. campestris (strain ATCC 33913 / DSM 3586 / NCPPB 528 / LMG 568 / P 25).